A 325-amino-acid polypeptide reads, in one-letter code: 1-aminocyclopropane-1-carboxylate oxidase 2 (325 aa).

The 101-residue stretch at 157–257 (PTFGTKVSNY…RMSIASFYNP (101 aa)) folds into the Fe2OG dioxygenase domain. 3 residues coordinate Fe cation: H181, D183, and H238.

The protein belongs to the iron/ascorbate-dependent oxidoreductase family. Fe cation is required as a cofactor.

It carries out the reaction 1-aminocyclopropane-1-carboxylate + L-ascorbate + O2 = ethene + L-dehydroascorbate + hydrogen cyanide + CO2 + 2 H2O. The protein operates within alkene biosynthesis; ethylene biosynthesis via S-adenosyl-L-methionine; ethylene from S-adenosyl-L-methionine: step 2/2. This chain is 1-aminocyclopropane-1-carboxylate oxidase 2 (ACO2), found in Doritaenopsis sp. (Moth orchid).